A 283-amino-acid polypeptide reads, in one-letter code: MGKILDGKFVANLLGEKLKEKVKDLKEEGITPHFCVINIGDDPASKIYVRTKKRRAEKMGIIQDIYQLPADTKQEVALNLIDKLNEDPDINGVMVQLPAPEQIDADELLERIDPNKDVDGLTPSNIGRIWMENHFIEPATAEGIIALLKYYKILLKGKNVVVIGRSNIVGKPVAALMLEQNATVTIAHSETENLAELTRNADIIVSATGQAFLVTEDMVKDGVVVVDVGMNHVNGKLVGDVDFENVKKKASYITPVPGGVGPLTVQFLMEAVVKLTRRQNGRE.

Residues 164-166 and Ser-189 contribute to the NADP(+) site; that span reads GRS.

This sequence belongs to the tetrahydrofolate dehydrogenase/cyclohydrolase family. Homodimer.

It carries out the reaction (6R)-5,10-methylene-5,6,7,8-tetrahydrofolate + NADP(+) = (6R)-5,10-methenyltetrahydrofolate + NADPH. The catalysed reaction is (6R)-5,10-methenyltetrahydrofolate + H2O = (6R)-10-formyltetrahydrofolate + H(+). Its pathway is one-carbon metabolism; tetrahydrofolate interconversion. In terms of biological role, catalyzes the oxidation of 5,10-methylenetetrahydrofolate to 5,10-methenyltetrahydrofolate and then the hydrolysis of 5,10-methenyltetrahydrofolate to 10-formyltetrahydrofolate. The sequence is that of Bifunctional protein FolD from Lactobacillus acidophilus (strain ATCC 700396 / NCK56 / N2 / NCFM).